A 193-amino-acid chain; its full sequence is Ion-translocating oxidoreductase complex subunit A (193 aa).

6 consecutive transmembrane segments (helical) span residues 5 to 25, 39 to 59, 63 to 83, 102 to 122, 134 to 154, and 171 to 191; these read LLLF…FLGL, MGMG…AWLI, ILIP…VIAV, LLGI…VALL, ALYG…FAAI, and AIAL…SGLV.

It belongs to the NqrDE/RnfAE family. The complex is composed of six subunits: RsxA, RsxB, RsxC, RsxD, RsxE and RsxG.

It is found in the cell inner membrane. Its function is as follows. Part of a membrane-bound complex that couples electron transfer with translocation of ions across the membrane. Required to maintain the reduced state of SoxR. The polypeptide is Ion-translocating oxidoreductase complex subunit A (Shigella boydii serotype 18 (strain CDC 3083-94 / BS512)).